We begin with the raw amino-acid sequence, 195 residues long: Pyridoxal 5'-phosphate synthase subunit PdxT (195 aa).

46-48 (GES) is an L-glutamine binding site. Catalysis depends on cysteine 78, which acts as the Nucleophile. L-glutamine contacts are provided by residues arginine 107 and 136-137 (IR). Active-site charge relay system residues include histidine 173 and glutamate 175.

This sequence belongs to the glutaminase PdxT/SNO family. In the presence of PdxS, forms a dodecamer of heterodimers. Only shows activity in the heterodimer.

It catalyses the reaction aldehydo-D-ribose 5-phosphate + D-glyceraldehyde 3-phosphate + L-glutamine = pyridoxal 5'-phosphate + L-glutamate + phosphate + 3 H2O + H(+). The enzyme catalyses L-glutamine + H2O = L-glutamate + NH4(+). The protein operates within cofactor biosynthesis; pyridoxal 5'-phosphate biosynthesis. Catalyzes the hydrolysis of glutamine to glutamate and ammonia as part of the biosynthesis of pyridoxal 5'-phosphate. The resulting ammonia molecule is channeled to the active site of PdxS. The sequence is that of Pyridoxal 5'-phosphate synthase subunit PdxT from Dehalococcoides mccartyi (strain ATCC BAA-2266 / KCTC 15142 / 195) (Dehalococcoides ethenogenes (strain 195)).